We begin with the raw amino-acid sequence, 465 residues long: UDP-N-acetylmuramate--L-alanine ligase (465 aa).

112 to 118 (GTHGKTT) lines the ATP pocket.

This sequence belongs to the MurCDEF family.

It localises to the cytoplasm. The enzyme catalyses UDP-N-acetyl-alpha-D-muramate + L-alanine + ATP = UDP-N-acetyl-alpha-D-muramoyl-L-alanine + ADP + phosphate + H(+). It functions in the pathway cell wall biogenesis; peptidoglycan biosynthesis. Its function is as follows. Cell wall formation. The protein is UDP-N-acetylmuramate--L-alanine ligase of Burkholderia lata (strain ATCC 17760 / DSM 23089 / LMG 22485 / NCIMB 9086 / R18194 / 383).